A 274-amino-acid chain; its full sequence is 2,3,4,5-tetrahydropyridine-2,6-dicarboxylate N-succinyltransferase (274 aa).

Residues Arg107 and Asp144 each contribute to the substrate site.

It belongs to the transferase hexapeptide repeat family. As to quaternary structure, homotrimer.

The protein resides in the cytoplasm. The catalysed reaction is (S)-2,3,4,5-tetrahydrodipicolinate + succinyl-CoA + H2O = (S)-2-succinylamino-6-oxoheptanedioate + CoA. The protein operates within amino-acid biosynthesis; L-lysine biosynthesis via DAP pathway; LL-2,6-diaminopimelate from (S)-tetrahydrodipicolinate (succinylase route): step 1/3. This Cereibacter sphaeroides (strain ATCC 17025 / ATH 2.4.3) (Rhodobacter sphaeroides) protein is 2,3,4,5-tetrahydropyridine-2,6-dicarboxylate N-succinyltransferase.